A 342-amino-acid polypeptide reads, in one-letter code: Ketol-acid reductoisomerase (NADP(+)) (342 aa).

Positions 2–182 (AEIYYDNDAD…GGLRAGGIKT (181 aa)) constitute a KARI N-terminal Rossmann domain. NADP(+)-binding positions include 25–28 (YGSQ), lysine 48, serine 51, serine 53, and 83–86 (DQVQ). Histidine 108 is a catalytic residue. Glycine 134 contacts NADP(+). One can recognise a KARI C-terminal knotted domain in the interval 183–328 (TFTEETETDL…RELRKLFAWN (146 aa)). Mg(2+) contacts are provided by aspartate 191, glutamate 195, glutamate 227, and glutamate 231. Serine 252 contacts substrate.

It belongs to the ketol-acid reductoisomerase family. Requires Mg(2+) as cofactor.

It carries out the reaction (2R)-2,3-dihydroxy-3-methylbutanoate + NADP(+) = (2S)-2-acetolactate + NADPH + H(+). The catalysed reaction is (2R,3R)-2,3-dihydroxy-3-methylpentanoate + NADP(+) = (S)-2-ethyl-2-hydroxy-3-oxobutanoate + NADPH + H(+). Its pathway is amino-acid biosynthesis; L-isoleucine biosynthesis; L-isoleucine from 2-oxobutanoate: step 2/4. It functions in the pathway amino-acid biosynthesis; L-valine biosynthesis; L-valine from pyruvate: step 2/4. Functionally, involved in the biosynthesis of branched-chain amino acids (BCAA). Catalyzes an alkyl-migration followed by a ketol-acid reduction of (S)-2-acetolactate (S2AL) to yield (R)-2,3-dihydroxy-isovalerate. In the isomerase reaction, S2AL is rearranged via a Mg-dependent methyl migration to produce 3-hydroxy-3-methyl-2-ketobutyrate (HMKB). In the reductase reaction, this 2-ketoacid undergoes a metal-dependent reduction by NADPH to yield (R)-2,3-dihydroxy-isovalerate. This chain is Ketol-acid reductoisomerase (NADP(+)), found in Leifsonia xyli subsp. xyli (strain CTCB07).